The chain runs to 169 residues: Zinc metalloproteinase-disintegrin-like mikarin (169 aa).

The Peptidase M12B domain maps to 14–57 (KYLEYVVVDNNMYRNYGNAGPCVMSAEISFEPLQEFSSCDIQEP). The 65-residue stretch at 65-129 (PAVCGNYYVE…PEICTGRSAK (65 aa)) folds into the Disintegrin domain. Intrachain disulfides connect Cys-68–Cys-97, Cys-79–Cys-92, Cys-81–Cys-87, Cys-105–Cys-111, Cys-110–Cys-123, and Cys-150–Cys-161. The D/ECD-tripeptide motif lies at 116–118 (DCD).

This sequence belongs to the venom metalloproteinase (M12B) family. P-III subfamily. P-IIIa sub-subfamily. Monomer. The cofactor is Zn(2+). In terms of tissue distribution, expressed by the venom gland.

The protein localises to the secreted. Inhibited by EDTA, but not by PMSF. Snake venom zinc metalloproteinase that calcium-independently catalyzes the conversion of prothrombin (F2) to alpha-thrombin through the formation of a thrombin intermediate. This Micropechis ikaheca (New Guinean small-eyed snake) protein is Zinc metalloproteinase-disintegrin-like mikarin.